The chain runs to 694 residues: Katanin p80 WD40 repeat-containing subunit B1 (694 aa).

6 WD repeats span residues 18-58 (AHSS…CIMS), 61-100 (GHTS…ILRT), 103-142 (GHKA…CVFR), 145-186 (GHTQ…TEFT), 188-226 (HTSA…MIGS), and 229-269 (GETG…DVVH). Disordered regions lie at residues 319–410 (KPIP…PFPA) and 470–492 (TTSA…STGI). Residues 327-349 (ALGTTLRRNYERPTTSCTGQEMK) show a composition bias toward polar residues. Residues 350–378 (QSSEADRRSPEGERRSPSSEDEKEDKESS) are compositionally biased toward basic and acidic residues. A compositionally biased stretch (low complexity) spans 470–481 (TTSASSPSRPVV). The segment covering 482–492 (NTTKPKPSTGI) has biased composition (polar residues).

Belongs to the WD repeat KATNB1 family. In terms of assembly, interacts with katna1. This interaction enhances the microtubule binding and severing activity of katna1 and also targets this activity to the centrosome.

It is found in the cytoplasm. The protein resides in the cytoskeleton. It localises to the microtubule organizing center. The protein localises to the centrosome. Its subcellular location is the spindle pole. It is found in the spindle. In terms of biological role, participates in a complex which severs microtubules in an ATP-dependent manner. May act to target the enzymatic subunit of this complex to sites of action such as the centrosome. Microtubule severing may promote rapid reorganization of cellular microtubule arrays and the release of microtubules from the centrosome following nucleation. This chain is Katanin p80 WD40 repeat-containing subunit B1 (katnb1), found in Danio rerio (Zebrafish).